The following is a 378-amino-acid chain: Zinc transporter 7 (378 aa).

Residues 1-37 (MLPLSIKDDEYKPPKFNLFGKISGWFRSILSDKTSRN) lie on the Cytoplasmic side of the membrane. A helical transmembrane segment spans residues 38-58 (LFFFLCLNLSFAFVELLYGIW). Topologically, residues 59–67 (SNCLGLISD) are lumenal. A helical membrane pass occupies residues 68-88 (SFHMFFDSTAILAGLAASVIS). Residues 89 to 102 (KWRDNDAFSYGYVR) lie on the Cytoplasmic side of the membrane. The chain crosses the membrane as a helical span at residues 103–123 (AEVLAGFVNGLFLIFTAFFIF). The Lumenal portion of the chain corresponds to 124 to 140 (SEGVERALAPPDVHHER). A helical membrane pass occupies residues 141 to 161 (LLLVSILGFVVNLVGIFVFNH). Positions 161 to 220 (HGGHGHSHGSGHGHSHSLFNGALDHSHGHEDHCHSHEAKHGAAHSHDHDHAHGHGHLHSH) are his-rich loop. Topologically, residues 162-238 (GGHGHSHGSG…AGPSRQILQG (77 aa)) are cytoplasmic. The span at 186-223 (SHGHEDHCHSHEAKHGAAHSHDHDHAHGHGHLHSHDGP) shows a compositional bias: basic and acidic residues. The disordered stretch occupies residues 186–224 (SHGHEDHCHSHEAKHGAAHSHDHDHAHGHGHLHSHDGPS). Residues 239-259 (VFLHILADTLGSIGVIASAIM) traverse the membrane as a helical segment. Topologically, residues 260–264 (MQNFG) are lumenal. Residues 265 to 285 (LMIADPICSILIAILIVVSVI) form a helical membrane-spanning segment. Topologically, residues 286-378 (PLLRESVGIL…LYVQIDFAAM (93 aa)) are cytoplasmic.

This sequence belongs to the cation diffusion facilitator (CDF) transporter (TC 2.A.4) family. SLC30A subfamily. Homooligomer. As to expression, highly expressed in liver, spleen, duodenum and part of the jejunum of small intestine (at protein level). Moderately expressed in kidney, lung, and brain. Barely detectable in heart. In brain, expressed in cerebellum, cerebral cortex and hippocampus (at protein level).

Its subcellular location is the golgi apparatus membrane. The protein localises to the cytoplasmic vesicle. It is found in the golgi apparatus. The protein resides in the trans-Golgi network. It localises to the sarcoplasmic reticulum. Its subcellular location is the mitochondrion. It carries out the reaction Zn(2+)(in) = Zn(2+)(out). In terms of biological role, zinc ion transporter mediating zinc entry from the cytosol into the lumen of organelles along the secretory pathway. By contributing to zinc ion homeostasis within the early secretory pathway, regulates the activation and folding of enzymes like alkaline phosphatases. The protein is Zinc transporter 7 of Mus musculus (Mouse).